The primary structure comprises 70 residues: Large ribosomal subunit protein bL32c (70 aa).

Disordered stretches follow at residues 1-20 (MAVPKKRTSRSKKKIRKNVR) and 51-70 (NDDSSGSSESKLTAIDLDDP). Positions 52–61 (DDSSGSSESK) are enriched in polar residues.

Belongs to the bacterial ribosomal protein bL32 family.

Its subcellular location is the plastid. It is found in the chloroplast. The sequence is that of Large ribosomal subunit protein bL32c (rpl32) from Pinus thunbergii (Japanese black pine).